The chain runs to 401 residues: Forkhead box protein H1 (401 aa).

The disordered stretch occupies residues M32–K57. The segment at residues K64–Q163 is a DNA-binding region (fork-head). The segment at V179–W251 is disordered. The span at Y185 to R195 shows a compositional bias: pro residues. The span at G221–T230 shows a compositional bias: polar residues. The segment at L307–P390 is SMAD-interaction domain (SID). Residues L311–Y315 carry the Fast/FoxH1 motif 1 (FM1) motif. Positions P321–L327 match the Fast/FoxH1 motif 2 (FM2) motif. Residues L363–P384 carry the SMAD interaction motif (SIM) motif.

Interacts with the MH2 domains of SMAD2 and SMAD3.

It localises to the nucleus. Transcriptional activator. Recognizes and binds to the DNA sequence 5'-TGT[GT][GT]ATT-3'. Required for induction of the goosecoid (GSC) promoter by TGF-beta or activin signaling. Forms a transcriptionally active complex containing FOXH1/SMAD2/SMAD4 on a site on the GSC promoter called TARE (TGF-beta/activin response element). This is Forkhead box protein H1 (Foxh1) from Mus musculus (Mouse).